The chain runs to 525 residues: Chromosomal replication initiator protein DnaA (525 aa).

The interval 1–71 is domain I, interacts with DnaA modulators; the sequence is MNDFWQHCSA…ADLAREFWNT (71 aa). Positions 71–188 are domain II; sequence TPIEVQFVLD…GEADSMYERS (118 aa). The disordered stretch occupies residues 160 to 182; it reads AAAGRRTWRPGPGAAPANGGEAD. The segment covering 169 to 181 has biased composition (low complexity); sequence PGPGAAPANGGEA. The domain III, AAA+ region stretch occupies residues 189 to 405; that stretch reads KLNPVLTFDN…GALRKILAYS (217 aa). Residues G233, G235, K236, and T237 each contribute to the ATP site. The domain IV, binds dsDNA stretch occupies residues 406–525; sequence KFHGREISIE…LHVLEQTLKG (120 aa).

The protein belongs to the DnaA family. As to quaternary structure, oligomerizes as a right-handed, spiral filament on DNA at oriC.

Its subcellular location is the cytoplasm. In terms of biological role, plays an essential role in the initiation and regulation of chromosomal replication. ATP-DnaA binds to the origin of replication (oriC) to initiate formation of the DNA replication initiation complex once per cell cycle. Binds the DnaA box (a 9 base pair repeat at the origin) and separates the double-stranded (ds)DNA. Forms a right-handed helical filament on oriC DNA; dsDNA binds to the exterior of the filament while single-stranded (ss)DNA is stabiized in the filament's interior. The ATP-DnaA-oriC complex binds and stabilizes one strand of the AT-rich DNA unwinding element (DUE), permitting loading of DNA polymerase. After initiation quickly degrades to an ADP-DnaA complex that is not apt for DNA replication. Binds acidic phospholipids. This chain is Chromosomal replication initiator protein DnaA, found in Burkholderia cenocepacia (strain ATCC BAA-245 / DSM 16553 / LMG 16656 / NCTC 13227 / J2315 / CF5610) (Burkholderia cepacia (strain J2315)).